We begin with the raw amino-acid sequence, 633 residues long: MIRITFSAEQKVKEYSGKVTGFDILQPDVLKEAIAFKVNGELHDLSREIEADAEIEVIQLSDEAGLDIIRHDAAHIMAQAVKELFPNTQITIGPTIQDGFYYDFATGRTFTTDDLTAIEKKMKEIVKSNHRFVREVWTRKQAIDFFSDIGEKYKVDIISSIPEGENLTVYRQGDFIDLCRGPHSPSTGRVKAFKLMKVAGAYWRGDAKGPMLQRIYGTAWRNKDELNAYLECLKEAEKRDHRKIAKDMDLFHIQEEAVGQVFWHEQGYILYNVLESYIRKKLINNGYFEVKTPILVSKELWEKSGHWDKFRENMFIVDESESKKLAIKPMNCPCHVQIFNSHTRSYRDLPIRMAEFGTCHRNESSGSLHGLMRVRGFTQDDAHIFCMEEQVNSETIKFCDLLKEVYSELGFNEISVKFSDRPDVRAGDDEVWDRAEKALLEAVKEAGLSYELSPGEGAFYGPKLEFVLKDAIGRSWQCGTLQVDFILPERLGAFYIGADGHKHHPVMLHRAILGTFERFIGILIENYAGKFPVWLAPTQLAILTITNEADGYATKISNVLKEQGVRVKTDLTNEKISYKIRLHSLNKVPILWIVGKNEVTSKTVSVRNLGSERQESFSLEKAIELLLKSINLN.

The TGS domain occupies 1 to 59 (MIRITFSAEQKVKEYSGKVTGFDILQPDVLKEAIAFKVNGELHDLSREIEADAEIEVIQ). The catalytic stretch occupies residues 240 to 532 (DHRKIAKDMD…LIENYAGKFP (293 aa)). Positions 332, 383, and 509 each coordinate Zn(2+).

This sequence belongs to the class-II aminoacyl-tRNA synthetase family. In terms of assembly, homodimer. It depends on Zn(2+) as a cofactor.

The protein localises to the cytoplasm. It carries out the reaction tRNA(Thr) + L-threonine + ATP = L-threonyl-tRNA(Thr) + AMP + diphosphate + H(+). Its function is as follows. Catalyzes the attachment of threonine to tRNA(Thr) in a two-step reaction: L-threonine is first activated by ATP to form Thr-AMP and then transferred to the acceptor end of tRNA(Thr). Also edits incorrectly charged L-seryl-tRNA(Thr). The chain is Threonine--tRNA ligase from Wolbachia sp. subsp. Drosophila simulans (strain wRi).